Consider the following 162-residue polypeptide: Cyclic pyranopterin monophosphate synthase (162 aa).

Substrate-binding positions include 75–77 (LCH) and 113–114 (ME). Residue D128 is part of the active site.

The protein belongs to the MoaC family. Homohexamer; trimer of dimers.

The catalysed reaction is (8S)-3',8-cyclo-7,8-dihydroguanosine 5'-triphosphate = cyclic pyranopterin phosphate + diphosphate. The protein operates within cofactor biosynthesis; molybdopterin biosynthesis. In terms of biological role, catalyzes the conversion of (8S)-3',8-cyclo-7,8-dihydroguanosine 5'-triphosphate to cyclic pyranopterin monophosphate (cPMP). The chain is Cyclic pyranopterin monophosphate synthase from Burkholderia cenocepacia (strain ATCC BAA-245 / DSM 16553 / LMG 16656 / NCTC 13227 / J2315 / CF5610) (Burkholderia cepacia (strain J2315)).